The primary structure comprises 163 residues: Glutathione peroxidase 2 (163 aa).

Cys36 is an active-site residue.

It belongs to the glutathione peroxidase family.

Its subcellular location is the cytoplasm. The catalysed reaction is 2 glutathione + H2O2 = glutathione disulfide + 2 H2O. In terms of biological role, may constitute a glutathione peroxidase-like protective system against oxidative stresses. The chain is Glutathione peroxidase 2 (gpx-2) from Caenorhabditis elegans.